A 383-amino-acid chain; its full sequence is Acetylornithine deacetylase (383 aa).

Residue His-80 coordinates Zn(2+). Asp-82 is a catalytic residue. Residue Asp-112 coordinates Zn(2+). Glu-144 is a catalytic residue. Positions 145, 169, and 355 each coordinate Zn(2+).

This sequence belongs to the peptidase M20A family. ArgE subfamily. Homodimer. Zn(2+) is required as a cofactor. Co(2+) serves as cofactor. The cofactor is glutathione.

Its subcellular location is the cytoplasm. It carries out the reaction N(2)-acetyl-L-ornithine + H2O = L-ornithine + acetate. It functions in the pathway amino-acid biosynthesis; L-arginine biosynthesis; L-ornithine from N(2)-acetyl-L-ornithine (linear): step 1/1. Its function is as follows. Catalyzes the hydrolysis of the amide bond of N(2)-acetylated L-amino acids. Cleaves the acetyl group from N-acetyl-L-ornithine to form L-ornithine, an intermediate in L-arginine biosynthesis pathway, and a branchpoint in the synthesis of polyamines. This chain is Acetylornithine deacetylase, found in Shigella sonnei (strain Ss046).